A 239-amino-acid polypeptide reads, in one-letter code: tRNA (guanine-N(7)-)-methyltransferase (239 aa).

Positions 69, 94, 121, and 144 each coordinate S-adenosyl-L-methionine. The active site involves aspartate 144. Residues lysine 148, aspartate 180, and 217–220 (TNFE) contribute to the substrate site.

The protein belongs to the class I-like SAM-binding methyltransferase superfamily. TrmB family. Monomer.

The enzyme catalyses guanosine(46) in tRNA + S-adenosyl-L-methionine = N(7)-methylguanosine(46) in tRNA + S-adenosyl-L-homocysteine. Its pathway is tRNA modification; N(7)-methylguanine-tRNA biosynthesis. Catalyzes the formation of N(7)-methylguanine at position 46 (m7G46) in tRNA. The chain is tRNA (guanine-N(7)-)-methyltransferase from Buchnera aphidicola subsp. Schizaphis graminum (strain Sg).